Reading from the N-terminus, the 139-residue chain is 6,7-dimethyl-8-ribityllumazine synthase (139 aa).

5-amino-6-(D-ribitylamino)uracil is bound by residues phenylalanine 11, 42-44, and 66-68; these read ALE and VVI. A (2S)-2-hydroxy-3-oxobutyl phosphate-binding site is contributed by 71-72; it reads ET. The active-site Proton donor is the histidine 74. Residue asparagine 98 coordinates 5-amino-6-(D-ribitylamino)uracil. Arginine 112 serves as a coordination point for (2S)-2-hydroxy-3-oxobutyl phosphate.

The protein belongs to the DMRL synthase family.

It catalyses the reaction (2S)-2-hydroxy-3-oxobutyl phosphate + 5-amino-6-(D-ribitylamino)uracil = 6,7-dimethyl-8-(1-D-ribityl)lumazine + phosphate + 2 H2O + H(+). It participates in cofactor biosynthesis; riboflavin biosynthesis; riboflavin from 2-hydroxy-3-oxobutyl phosphate and 5-amino-6-(D-ribitylamino)uracil: step 1/2. In terms of biological role, catalyzes the formation of 6,7-dimethyl-8-ribityllumazine by condensation of 5-amino-6-(D-ribitylamino)uracil with 3,4-dihydroxy-2-butanone 4-phosphate. This is the penultimate step in the biosynthesis of riboflavin. This chain is 6,7-dimethyl-8-ribityllumazine synthase, found in Novosphingobium aromaticivorans (strain ATCC 700278 / DSM 12444 / CCUG 56034 / CIP 105152 / NBRC 16084 / F199).